Here is a 344-residue protein sequence, read N- to C-terminus: tRNA N6-adenosine threonylcarbamoyltransferase (344 aa).

Residues His111 and His115 each contribute to the Fe cation site. Substrate is bound by residues 136 to 140, Asp169, Gly182, and Asn279; that span reads LVSGG. Asp307 contributes to the Fe cation binding site.

It belongs to the KAE1 / TsaD family. Fe(2+) serves as cofactor.

The protein resides in the cytoplasm. The catalysed reaction is L-threonylcarbamoyladenylate + adenosine(37) in tRNA = N(6)-L-threonylcarbamoyladenosine(37) in tRNA + AMP + H(+). In terms of biological role, required for the formation of a threonylcarbamoyl group on adenosine at position 37 (t(6)A37) in tRNAs that read codons beginning with adenine. Is involved in the transfer of the threonylcarbamoyl moiety of threonylcarbamoyl-AMP (TC-AMP) to the N6 group of A37, together with TsaE and TsaB. TsaD likely plays a direct catalytic role in this reaction. The sequence is that of tRNA N6-adenosine threonylcarbamoyltransferase from Mannheimia succiniciproducens (strain KCTC 0769BP / MBEL55E).